Consider the following 170-residue polypeptide: MQNTIRIIGIDPGLRRTGWGVIETLGNSLRFVASGTVTSDGELDLASRLCQLHDGLAEVVHGYQPHEAAVEQTFVNKDATATLKLGQARGIAMLVPARAGLRVAEYAPNAVKKAVIGVGHGEKQQIHMMLKVLMPKAEFKGNDAADALAIAICHAHNRQAVTSRLAALAG.

Residues Asp11, Glu71, and Asp143 contribute to the active site. Asp11, Glu71, and Asp143 together coordinate Mg(2+).

The protein belongs to the RuvC family. In terms of assembly, homodimer which binds Holliday junction (HJ) DNA. The HJ becomes 2-fold symmetrical on binding to RuvC with unstacked arms; it has a different conformation from HJ DNA in complex with RuvA. In the full resolvosome a probable DNA-RuvA(4)-RuvB(12)-RuvC(2) complex forms which resolves the HJ. The cofactor is Mg(2+).

It is found in the cytoplasm. It carries out the reaction Endonucleolytic cleavage at a junction such as a reciprocal single-stranded crossover between two homologous DNA duplexes (Holliday junction).. Functionally, the RuvA-RuvB-RuvC complex processes Holliday junction (HJ) DNA during genetic recombination and DNA repair. Endonuclease that resolves HJ intermediates. Cleaves cruciform DNA by making single-stranded nicks across the HJ at symmetrical positions within the homologous arms, yielding a 5'-phosphate and a 3'-hydroxyl group; requires a central core of homology in the junction. The consensus cleavage sequence is 5'-(A/T)TT(C/G)-3'. Cleavage occurs on the 3'-side of the TT dinucleotide at the point of strand exchange. HJ branch migration catalyzed by RuvA-RuvB allows RuvC to scan DNA until it finds its consensus sequence, where it cleaves and resolves the cruciform DNA. The chain is Crossover junction endodeoxyribonuclease RuvC from Rhizobium meliloti (strain 1021) (Ensifer meliloti).